Reading from the N-terminus, the 51-residue chain is VTVDCSGYPKPDCTLESFPLCGSDNQTYSNKCAFCNAAVERNVTLRHLGEC.

The Kazal-like domain maps to 3-51 (VDCSGYPKPDCTLESFPLCGSDNQTYSNKCAFCNAAVERNVTLRHLGEC). 3 disulfide bridges follow: Cys-5/Cys-35, Cys-13/Cys-32, and Cys-21/Cys-51. N-linked (GlcNAc...) asparagine glycosylation occurs at Asn-42.

It is found in the secreted. This chain is Ovomucoid, found in Rhynchotus rufescens (Red-winged tinamou).